The chain runs to 299 residues: Centriolar and ciliogenesis-associated protein HYLS1 (299 aa).

Serine 179 carries the post-translational modification Phosphoserine.

It belongs to the HYLS1 family.

It localises to the cytoplasm. The protein localises to the cell projection. Its subcellular location is the cilium. The protein resides in the cytoskeleton. It is found in the microtubule organizing center. It localises to the centrosome. The protein localises to the centriole. In terms of biological role, plays a role in ciliogenesis. This chain is Centriolar and ciliogenesis-associated protein HYLS1, found in Homo sapiens (Human).